We begin with the raw amino-acid sequence, 493 residues long: Lysine--tRNA ligase (493 aa).

2 residues coordinate Mg(2+): Glu402 and Glu409.

Belongs to the class-II aminoacyl-tRNA synthetase family. Homodimer. It depends on Mg(2+) as a cofactor.

The protein resides in the cytoplasm. It catalyses the reaction tRNA(Lys) + L-lysine + ATP = L-lysyl-tRNA(Lys) + AMP + diphosphate. The polypeptide is Lysine--tRNA ligase (Fusobacterium nucleatum subsp. nucleatum (strain ATCC 25586 / DSM 15643 / BCRC 10681 / CIP 101130 / JCM 8532 / KCTC 2640 / LMG 13131 / VPI 4355)).